The primary structure comprises 398 residues: Acetate kinase (398 aa).

Position 10 (Asn-10) interacts with Mg(2+). Residue Lys-17 participates in ATP binding. Arg-89 contributes to the substrate binding site. The Proton donor/acceptor role is filled by Asp-148. Residues 208–212 (HLGNG), 283–285 (DCR), and 331–335 (GIGEN) contribute to the ATP site. Glu-385 provides a ligand contact to Mg(2+).

It belongs to the acetokinase family. In terms of assembly, homodimer. It depends on Mg(2+) as a cofactor. The cofactor is Mn(2+).

It localises to the cytoplasm. It carries out the reaction acetate + ATP = acetyl phosphate + ADP. The protein operates within metabolic intermediate biosynthesis; acetyl-CoA biosynthesis; acetyl-CoA from acetate: step 1/2. Its function is as follows. Catalyzes the formation of acetyl phosphate from acetate and ATP. Can also catalyze the reverse reaction. This is Acetate kinase from Histophilus somni (strain 2336) (Haemophilus somnus).